The sequence spans 252 residues: tRNA (guanine-N(7)-)-methyltransferase (252 aa).

Residues E51, D76, N103, and D125 each coordinate S-adenosyl-L-methionine. Residue D125 is part of the active site. Residues K129, D159, and 199–202 (TYYE) contribute to the substrate site.

Belongs to the class I-like SAM-binding methyltransferase superfamily. TrmB family.

The catalysed reaction is guanosine(46) in tRNA + S-adenosyl-L-methionine = N(7)-methylguanosine(46) in tRNA + S-adenosyl-L-homocysteine. It participates in tRNA modification; N(7)-methylguanine-tRNA biosynthesis. Functionally, catalyzes the formation of N(7)-methylguanine at position 46 (m7G46) in tRNA. The sequence is that of tRNA (guanine-N(7)-)-methyltransferase from Bacteroides fragilis (strain YCH46).